Consider the following 197-residue polypeptide: Small ribosomal subunit protein uS7 (197 aa).

It belongs to the universal ribosomal protein uS7 family.

The sequence is that of Small ribosomal subunit protein uS7 (RPS5) from Cicer arietinum (Chickpea).